The following is a 206-amino-acid chain: Glycerol-3-phosphate acyltransferase 1 (206 aa).

5 helical membrane-spanning segments follow: residues 14-34, 67-87, 91-111, 124-144, and 148-168; these read IALA…GLIL, ATLL…SYFL, AAII…WIGF, LLGV…AVAF, and YSSL…WILG.

Belongs to the PlsY family. As to quaternary structure, probably interacts with PlsX.

Its subcellular location is the cell inner membrane. The enzyme catalyses an acyl phosphate + sn-glycerol 3-phosphate = a 1-acyl-sn-glycero-3-phosphate + phosphate. The protein operates within lipid metabolism; phospholipid metabolism. Functionally, catalyzes the transfer of an acyl group from acyl-phosphate (acyl-PO(4)) to glycerol-3-phosphate (G3P) to form lysophosphatidic acid (LPA). This enzyme utilizes acyl-phosphate as fatty acyl donor, but not acyl-CoA or acyl-ACP. This chain is Glycerol-3-phosphate acyltransferase 1, found in Rhizobium johnstonii (strain DSM 114642 / LMG 32736 / 3841) (Rhizobium leguminosarum bv. viciae).